Reading from the N-terminus, the 74-residue chain is MSSGGLLLLLGLLTLWEVLTPVSSKDRPKKPGLCPPRPQKPCVKECKNDWSCPGQQKCCNYGCIDECRDPIFVN.

An N-terminal signal peptide occupies residues 1–24 (MSSGGLLLLLGLLTLWEVLTPVSS). Residues 27-71 (RPKKPGLCPPRPQKPCVKECKNDWSCPGQQKCCNYGCIDECRDPI) form the WAP domain. Intrachain disulfides connect C34–C59, C42–C63, C46–C58, and C52–C67.

The protein belongs to the venom waprin family. In terms of tissue distribution, expressed by the venom gland.

The protein resides in the secreted. In terms of biological role, damages membranes of susceptible bacteria. Has antibacterial activity against the Gram-positive bacteria B.megaterium and S.warneri. After 45 minutes of treatment with this protein, B.megaterium have no visible pili and are smooth. Has no antibacterial activity against the Gram-positive bacteria B.thuringiensis, S.aureus, S.clavuligerus and B. anthracis, or the Gram-negative bacteria E.coli and A.tumefaciens. Has no hemolytic activity. Does not inhibit the proteinases elastase and cathepsin G. Is not toxic to mice. This chain is Omwaprin-b, found in Oxyuranus microlepidotus (Inland taipan).